The chain runs to 664 residues: uncharacterized protein (664 aa).

This is an uncharacterized protein from Mycoplasma pneumoniae (strain ATCC 29342 / M129 / Subtype 1) (Mycoplasmoides pneumoniae).